A 472-amino-acid chain; its full sequence is Serine/threonine-protein kinase ULK3 (472 aa).

A Protein kinase domain is found at Phe-14–Val-270. ATP is bound by residues Leu-20 to Val-28 and Lys-44. The Proton acceptor role is filled by Asp-137. Position 176 is a phosphoserine (Ser-176). The 69-residue stretch at Ser-280–Val-348 folds into the MIT 1 domain. Phosphoserine; by autocatalysis is present on residues Ser-350, Ser-384, and Ser-464. Residues Arg-375–Ile-444 form the MIT 2 domain.

The protein belongs to the protein kinase superfamily. Ser/Thr protein kinase family. APG1/unc-51/ULK1 subfamily. In terms of assembly, interacts (via protein kinase domain) with SUFU. Post-translationally, autophosphorylated. Autophosphorylation is blocked by interaction with SUFU.

Its subcellular location is the cytoplasm. The enzyme catalyses L-seryl-[protein] + ATP = O-phospho-L-seryl-[protein] + ADP + H(+). The catalysed reaction is L-threonyl-[protein] + ATP = O-phospho-L-threonyl-[protein] + ADP + H(+). In terms of biological role, serine/threonine protein kinase that acts as a regulator of Sonic hedgehog (SHH) signaling and autophagy. Acts as a negative regulator of SHH signaling in the absence of SHH ligand: interacts with SUFU, thereby inactivating the protein kinase activity and preventing phosphorylation of GLI proteins (GLI1, GLI2 and/or GLI3). Positively regulates SHH signaling in the presence of SHH: dissociates from SUFU, autophosphorylates and mediates phosphorylation of GLI2, activating it and promoting its nuclear translocation. Phosphorylates in vitro GLI2, as well as GLI1 and GLI3, although less efficiently. Also acts as a regulator of autophagy: following cellular senescence, able to induce autophagy. The sequence is that of Serine/threonine-protein kinase ULK3 (Ulk3) from Mus musculus (Mouse).